The following is a 433-amino-acid chain: Trigger factor (433 aa).

The PPIase FKBP-type domain occupies 161 to 246; it reads EDRVVIDFVG…LKKVENIVLP (86 aa).

The protein belongs to the FKBP-type PPIase family. Tig subfamily.

It localises to the cytoplasm. The enzyme catalyses [protein]-peptidylproline (omega=180) = [protein]-peptidylproline (omega=0). In terms of biological role, involved in protein export. Acts as a chaperone by maintaining the newly synthesized protein in an open conformation. Functions as a peptidyl-prolyl cis-trans isomerase. The protein is Trigger factor of Actinobacillus pleuropneumoniae serotype 7 (strain AP76).